The following is an 85-amino-acid chain: uncharacterized protein (85 aa).

2 helical membrane passes run 13-35 (KWLA…FQPL) and 59-81 (EGIV…HLLL).

The protein resides in the cell membrane. This is an uncharacterized protein from Archaeoglobus fulgidus (strain ATCC 49558 / DSM 4304 / JCM 9628 / NBRC 100126 / VC-16).